Consider the following 704-residue polypeptide: Neutral ceramidase (704 aa).

The N-terminal stretch at 1–23 is a signal peptide; the sequence is MANSKMAFLAFLAVSFLCGLVSA. N-linked (GlcNAc...) asparagine glycosylation occurs at N230. The active-site Nucleophile is the S276. N-linked (GlcNAc...) asparagine glycans are attached at residues N362, N550, and N598.

Belongs to the neutral ceramidase family. N-glycosylated. Widely expressed in different tissues but enriched in neurons at all stages of development.

Its subcellular location is the secreted. The enzyme catalyses an N-acylsphing-4-enine + H2O = sphing-4-enine + a fatty acid. Hydrolyzes the sphingolipid ceramide into sphingosine and free fatty acid at an optimal pH of 6.5-7.5. Acts as a key regulator of sphingolipid signaling metabolites by generating sphingosine at the cell surface. Regulates synaptic vesicle exocytosis and trafficking by controlling presynaptic terminal sphingolipid composition. The protein is Neutral ceramidase (CDase) of Drosophila melanogaster (Fruit fly).